We begin with the raw amino-acid sequence, 456 residues long: Putative alanyl-tRNA editing protein alaX (456 aa).

Zn(2+) is bound by residues His-125, His-129, Cys-240, and His-244.

This sequence belongs to the class-II aminoacyl-tRNA synthetase family. Alax-L subfamily. Zn(2+) is required as a cofactor.

May function in trans to edit the amino acid moiety from incorrectly charged tRNA(Ala). The sequence is that of Putative alanyl-tRNA editing protein alaX from Saccharomyces cerevisiae (strain ATCC 204508 / S288c) (Baker's yeast).